We begin with the raw amino-acid sequence, 240 residues long: 1-(5-phosphoribosyl)-5-[(5-phosphoribosylamino)methylideneamino] imidazole-4-carboxamide isomerase (240 aa).

The active-site Proton acceptor is Asp9. The active-site Proton donor is the Asp131.

It belongs to the HisA/HisF family.

Its subcellular location is the cytoplasm. It carries out the reaction 1-(5-phospho-beta-D-ribosyl)-5-[(5-phospho-beta-D-ribosylamino)methylideneamino]imidazole-4-carboxamide = 5-[(5-phospho-1-deoxy-D-ribulos-1-ylimino)methylamino]-1-(5-phospho-beta-D-ribosyl)imidazole-4-carboxamide. It participates in amino-acid biosynthesis; L-histidine biosynthesis; L-histidine from 5-phospho-alpha-D-ribose 1-diphosphate: step 4/9. In Azobacteroides pseudotrichonymphae genomovar. CFP2, this protein is 1-(5-phosphoribosyl)-5-[(5-phosphoribosylamino)methylideneamino] imidazole-4-carboxamide isomerase.